A 331-amino-acid chain; its full sequence is Phosphoribosylformylglycinamidine cyclo-ligase (331 aa).

Belongs to the AIR synthase family.

Its subcellular location is the cytoplasm. It catalyses the reaction 2-formamido-N(1)-(5-O-phospho-beta-D-ribosyl)acetamidine + ATP = 5-amino-1-(5-phospho-beta-D-ribosyl)imidazole + ADP + phosphate + H(+). The protein operates within purine metabolism; IMP biosynthesis via de novo pathway; 5-amino-1-(5-phospho-D-ribosyl)imidazole from N(2)-formyl-N(1)-(5-phospho-D-ribosyl)glycinamide: step 2/2. This Clostridium botulinum (strain Loch Maree / Type A3) protein is Phosphoribosylformylglycinamidine cyclo-ligase.